The primary structure comprises 364 residues: MKRPLVDYDSGSGSESECGSSSDGPKSSSTNIPPQLKKRRNGDIGTRAPPSAPASTPIAPLGRSSGTHTIPPKPAPKSTSSLPPISDRFNDLYASNTRTAVSDDPSLHQGRQRQVPHIPGNWPSHVYIDWDPSSGDRELLSSLVDKLQTRVAAAAQRYPDLEGVKISTALRDPELPVDKPLHISLSAPLTLTSKNKDAFLDDVTRALRSSGVSPFVVDFSGGVNWYRSEESTRSFLVLRVREVQNTGMTTADSSPNPRLTTLLQRCNKTAKEYGQPPLYDSQDMGYRFHVTIAWTHARPSESLKQLTDSIFDDCKTMYSENMSIRDKLCTGSSFRVETVKVKIGNHVTRFELPDKGLALPVKTT.

The disordered stretch occupies residues 1 to 120; it reads MKRPLVDYDS…RQRQVPHIPG (120 aa). The segment covering 9-29 has biased composition (low complexity); sequence DSGSGSESECGSSSDGPKSSS. Residue H182 is the Proton acceptor of the active site. Residues 182–184, Y279, and 281–291 contribute to the AMP site; these read HIS and SQDMGYRFHVT. Residues Y279 and 287-291 each bind UMP; that span reads RFHVT. Residue H289 is the Proton donor of the active site.

It belongs to the 2H phosphoesterase superfamily. USB1 family.

The protein localises to the nucleus. 3'-5' RNA exonuclease that trims the 3' end of oligo(U) tracts of the pre-U6 small nuclear RNA (snRNA) molecule, leading to the formation of a U6 snRNA 3' end-terminated with a 2',3'-cyclic phosphate. Participates in the U6 snRNA 3' end processing that prevents U6 snRNA degradation. In Neurospora crassa (strain ATCC 24698 / 74-OR23-1A / CBS 708.71 / DSM 1257 / FGSC 987), this protein is U6 snRNA phosphodiesterase 1 (usb1).